The chain runs to 617 residues: Dihydroxy-acid dehydratase (617 aa).

Aspartate 81 provides a ligand contact to Mg(2+). Cysteine 122 serves as a coordination point for [2Fe-2S] cluster. Residues aspartate 123 and lysine 124 each contribute to the Mg(2+) site. An N6-carboxylysine modification is found at lysine 124. Cysteine 197 is a [2Fe-2S] cluster binding site. Mg(2+) is bound at residue glutamate 494. The active-site Proton acceptor is the serine 520.

It belongs to the IlvD/Edd family. Homodimer. The cofactor is [2Fe-2S] cluster. It depends on Mg(2+) as a cofactor.

It catalyses the reaction (2R)-2,3-dihydroxy-3-methylbutanoate = 3-methyl-2-oxobutanoate + H2O. The enzyme catalyses (2R,3R)-2,3-dihydroxy-3-methylpentanoate = (S)-3-methyl-2-oxopentanoate + H2O. The protein operates within amino-acid biosynthesis; L-isoleucine biosynthesis; L-isoleucine from 2-oxobutanoate: step 3/4. Its pathway is amino-acid biosynthesis; L-valine biosynthesis; L-valine from pyruvate: step 3/4. Functions in the biosynthesis of branched-chain amino acids. Catalyzes the dehydration of (2R,3R)-2,3-dihydroxy-3-methylpentanoate (2,3-dihydroxy-3-methylvalerate) into 2-oxo-3-methylpentanoate (2-oxo-3-methylvalerate) and of (2R)-2,3-dihydroxy-3-methylbutanoate (2,3-dihydroxyisovalerate) into 2-oxo-3-methylbutanoate (2-oxoisovalerate), the penultimate precursor to L-isoleucine and L-valine, respectively. The polypeptide is Dihydroxy-acid dehydratase (Parafrankia sp. (strain EAN1pec)).